A 114-amino-acid polypeptide reads, in one-letter code: Cytochrome c2 (114 aa).

Gln1 bears the Pyrrolidone carboxylic acid mark. Cys13, Cys16, His17, and Met93 together coordinate heme c.

It belongs to the cytochrome c family. Post-translationally, binds 1 heme c group covalently per subunit.

Functionally, cytochrome c2 is found mainly in purple, non-sulfur, photosynthetic bacteria where it functions as the electron donor to the oxidized bacteriochlorophyll in the photophosphorylation pathway. However, it may also have a role in the respiratory chain and is found in some non-photosynthetic bacteria. The sequence is that of Cytochrome c2 (cycA) from Rhodopseudomonas palustris.